The primary structure comprises 359 residues: Medium-wave-sensitive opsin 1 (359 aa).

Over 1 to 47 the chain is Extracellular; the sequence is MAQRLTGEQTLDHYEDSTHASIFTYTNSNSTKGPFEGPNYHIAPRWV. The tract at residues 12-38 is required for 11-cis-retinal regeneration; that stretch reads DHYEDSTHASIFTYTNSNSTKGPFEGP. N-linked (GlcNAc...) asparagine glycosylation is present at N29. The helical transmembrane segment at 48–72 threads the bilayer; sequence YHLTSTWMILVVVASVFTNGLVLAA. The Cytoplasmic portion of the chain corresponds to 73 to 84; it reads TMRFKKLRHPLN. Residues 85 to 110 form a helical membrane-spanning segment; that stretch reads WILVNLAVADLAETIIASTISVVNQI. The Extracellular segment spans residues 111–124; it reads YGYFVLGHPLCVIE. A disulfide bond links C121 and C198. A helical transmembrane segment spans residues 125–144; that stretch reads GYIVSLCGITGLWSLAIISW. At 145-163 the chain is on the cytoplasmic side; sequence ERWLVVCKPFGNVRFDAKL. A helical membrane pass occupies residues 164–187; sequence ATVGIVFSWVWAAIWTAPPIFGWS. Over 188–213 the chain is Extracellular; that stretch reads RYWPYGLKTSCGPDVFSGTSYPGVQS. Residues 214–241 traverse the membrane as a helical segment; the sequence is YMMVLMVTCCIFPLSIIVLCYLQVWLAI. The Cytoplasmic portion of the chain corresponds to 242 to 263; the sequence is RAVAKQQKESESTQKAEKEVTR. The helical transmembrane segment at 264–287 threads the bilayer; sequence MVVVMVFAYCLCWGPYTFFACFAT. The Extracellular segment spans residues 288-295; sequence AHPGYAFH. A helical membrane pass occupies residues 296-320; the sequence is PLVASLPSYFAKSATIYNPIIYVFM. K307 carries the post-translational modification N6-(retinylidene)lysine. Residues 321–359 lie on the Cytoplasmic side of the membrane; the sequence is NRQFRNCILHLFGKKVDDSSELSSTSKTEVSSVSSVSPA.

It belongs to the G-protein coupled receptor 1 family. Opsin subfamily. Monomer. Homodimer. Homotetramer. In terms of processing, N-glycosylated. O-glycosylated. Phosphorylated on some or all of the serine and threonine residues present in the C-terminal region. In terms of tissue distribution, expressed in retina (at protein level). Expressed in cone photoreceptor cells (at protein level).

It localises to the cell membrane. Its function is as follows. Visual pigments are the light-absorbing molecules that mediate vision. They consist of an apoprotein, opsin, covalently linked to cis-retinal. May increase spectral sensitivity in dim light. The protein is Medium-wave-sensitive opsin 1 (Opn1mw) of Mus musculus (Mouse).